Consider the following 637-residue polypeptide: Threonine--tRNA ligase (637 aa).

Residues 1–61 enclose the TGS domain; it reads MIKITLKDGK…NEDSTLEILT (61 aa). Residues 242–532 form a catalytic region; sequence DHRKLGKELG…LTEHYAGAFP (291 aa). Residues cysteine 333, histidine 384, and histidine 509 each contribute to the Zn(2+) site.

Belongs to the class-II aminoacyl-tRNA synthetase family. Homodimer. Zn(2+) is required as a cofactor.

It localises to the cytoplasm. It carries out the reaction tRNA(Thr) + L-threonine + ATP = L-threonyl-tRNA(Thr) + AMP + diphosphate + H(+). Catalyzes the attachment of threonine to tRNA(Thr) in a two-step reaction: L-threonine is first activated by ATP to form Thr-AMP and then transferred to the acceptor end of tRNA(Thr). Also edits incorrectly charged L-seryl-tRNA(Thr). The chain is Threonine--tRNA ligase from Clostridium novyi (strain NT).